The sequence spans 101 residues: NAD(P)H-quinone oxidoreductase subunit 4L, chloroplastic (101 aa).

3 helical membrane-spanning segments follow: residues 2–22, 32–52, and 61–81; these read MFEHVLFLSVYLFSIGIYGLI, ICLELILNSINLNLVTFSDLF, and IFAIFVIALAAAEAAIGLSIL.

This sequence belongs to the complex I subunit 4L family. In terms of assembly, NDH is composed of at least 16 different subunits, 5 of which are encoded in the nucleus.

It localises to the plastid. The protein resides in the chloroplast thylakoid membrane. It carries out the reaction a plastoquinone + NADH + (n+1) H(+)(in) = a plastoquinol + NAD(+) + n H(+)(out). The catalysed reaction is a plastoquinone + NADPH + (n+1) H(+)(in) = a plastoquinol + NADP(+) + n H(+)(out). In terms of biological role, NDH shuttles electrons from NAD(P)H:plastoquinone, via FMN and iron-sulfur (Fe-S) centers, to quinones in the photosynthetic chain and possibly in a chloroplast respiratory chain. The immediate electron acceptor for the enzyme in this species is believed to be plastoquinone. Couples the redox reaction to proton translocation, and thus conserves the redox energy in a proton gradient. The protein is NAD(P)H-quinone oxidoreductase subunit 4L, chloroplastic of Agrostis stolonifera (Creeping bentgrass).